Consider the following 209-residue polypeptide: Streptogramin A acetyltransferase (209 aa).

Residue histidine 82 is part of the active site.

Belongs to the transferase hexapeptide repeat family. In terms of assembly, homohexamer.

Functionally, inactivates the A compounds of streptogramin antibiotics by acetylation, thus providing resistance to these antibiotics. The protein is Streptogramin A acetyltransferase (vatD) of Enterococcus faecium (Streptococcus faecium).